A 210-amino-acid polypeptide reads, in one-letter code: Interleukin-6 (210 aa).

The signal sequence occupies residues 1 to 25 (MNSLSTSAFSPVAFSLGLLLVMATA). Cys72 and Cys78 are oxidised to a cystine. Ser81 bears the Phosphoserine mark. Cysteines 101 and 111 form a disulfide.

The protein belongs to the IL-6 superfamily. Component of a hexamer of two molecules each of IL6, IL6R and IL6ST; first binds to IL6R to associate with the signaling subunit IL6ST. Interacts with IL6R (via the N-terminal ectodomain); this interaction may be affected by IL6R-binding with SORL1, hence decreasing IL6 cis signaling. Interacts with SORL1 (via the N-terminal ectodomain); this interaction leads to IL6 internalization and lysosomal degradation. May form a trimeric complex with the soluble SORL1 ectodomain and soluble IL6R receptor; this interaction might stabilize circulating IL6, hence promoting IL6 trans signaling.

The protein localises to the secreted. Cytokine with a wide variety of biological functions in immunity, tissue regeneration, and metabolism. Binds to IL6R, then the complex associates to the signaling subunit IL6ST/gp130 to trigger the intracellular IL6-signaling pathway. The interaction with the membrane-bound IL6R and IL6ST stimulates 'classic signaling', whereas the binding of IL6 and soluble IL6R to IL6ST stimulates 'trans-signaling'. Alternatively, 'cluster signaling' occurs when membrane-bound IL6:IL6R complexes on transmitter cells activate IL6ST receptors on neighboring receiver cells. In terms of biological role, IL6 is a potent inducer of the acute phase response. Rapid production of IL6 contributes to host defense during infection and tissue injury, but excessive IL6 synthesis is involved in disease pathology. In the innate immune response, is synthesized by myeloid cells, such as macrophages and dendritic cells, upon recognition of pathogens through toll-like receptors (TLRs) at the site of infection or tissue injury. In the adaptive immune response, is required for the differentiation of B cells into immunoglobulin-secreting cells. Plays a major role in the differentiation of CD4(+) T cell subsets. Essential factor for the development of T follicular helper (Tfh) cells that are required for the induction of germinal-center formation. Required to drive naive CD4(+) T cells to the Th17 lineage. Also required for proliferation of myeloma cells and the survival of plasmablast cells. Its function is as follows. Acts as an essential factor in bone homeostasis and on vessels directly or indirectly by induction of VEGF, resulting in increased angiogenesis activity and vascular permeability. Induces, through 'trans-signaling' and synergistically with IL1B and TNF, the production of VEGF. Involved in metabolic controls, is discharged into the bloodstream after muscle contraction increasing lipolysis and improving insulin resistance. 'Trans-signaling' in central nervous system also regulates energy and glucose homeostasis. Mediates, through GLP-1, crosstalk between insulin-sensitive tissues, intestinal L cells and pancreatic islets to adapt to changes in insulin demand. Also acts as a myokine. Plays a protective role during liver injury, being required for maintenance of tissue regeneration. Also has a pivotal role in iron metabolism by regulating HAMP/hepcidin expression upon inflammation or bacterial infection. Through activation of IL6ST-YAP-NOTCH pathway, induces inflammation-induced epithelial regeneration. The sequence is that of Interleukin-6 (IL6) from Mustela putorius furo (European domestic ferret).